A 277-amino-acid polypeptide reads, in one-letter code: Large ribosomal subunit protein uL2 (277 aa).

The disordered stretch occupies residues 219–277; the sequence is TVRGSVMNPNDHPHGGGEGKAPVGRKAPSTPWGKPALGLKTRNKKAKSDKLIVRRRNEK. Positions 264–277 are enriched in basic and acidic residues; sequence AKSDKLIVRRRNEK.

Belongs to the universal ribosomal protein uL2 family. Part of the 50S ribosomal subunit. Forms a bridge to the 30S subunit in the 70S ribosome.

Its function is as follows. One of the primary rRNA binding proteins. Required for association of the 30S and 50S subunits to form the 70S ribosome, for tRNA binding and peptide bond formation. It has been suggested to have peptidyltransferase activity; this is somewhat controversial. Makes several contacts with the 16S rRNA in the 70S ribosome. The sequence is that of Large ribosomal subunit protein uL2 from Streptococcus gordonii (strain Challis / ATCC 35105 / BCRC 15272 / CH1 / DL1 / V288).